A 274-amino-acid chain; its full sequence is HTH-type transcriptional regulator GadX (274 aa).

Residues threonine 145 to arginine 242 form the HTH araC/xylS-type domain. 2 consecutive DNA-binding regions (H-T-H motif) follow at residues alanine 162–glutamate 183 and isoleucine 209–tyrosine 232.

In terms of assembly, homodimer.

Functionally, positively regulates the expression of about fifteen genes involved in acid resistance such as gadA, gadB and gadC. Depending on the conditions (growth phase and medium), can repress gadW. This Escherichia coli (strain K12) protein is HTH-type transcriptional regulator GadX (gadX).